A 149-amino-acid chain; its full sequence is Macrodomain Ter protein (149 aa).

This sequence belongs to the MatP family. As to quaternary structure, homodimer.

It localises to the cytoplasm. Functionally, required for spatial organization of the terminus region of the chromosome (Ter macrodomain) during the cell cycle. Prevents early segregation of duplicated Ter macrodomains during cell division. Binds specifically to matS, which is a 13 bp signature motif repeated within the Ter macrodomain. The sequence is that of Macrodomain Ter protein from Vibrio vulnificus (strain YJ016).